A 199-amino-acid polypeptide reads, in one-letter code: Recombination protein RecR (199 aa).

The C4-type zinc-finger motif lies at cysteine 57–cysteine 72. Positions lysine 80–serine 176 constitute a Toprim domain.

It belongs to the RecR family.

Functionally, may play a role in DNA repair. It seems to be involved in an RecBC-independent recombinational process of DNA repair. It may act with RecF and RecO. This chain is Recombination protein RecR, found in Pediococcus pentosaceus (strain ATCC 25745 / CCUG 21536 / LMG 10740 / 183-1w).